A 351-amino-acid chain; its full sequence is Protein-glutamate methylesterase/protein-glutamine glutaminase 2 (351 aa).

The region spanning 4 to 121 (KVLVVDDSAL…PQDFNEYQDL (118 aa)) is the Response regulatory domain. D55 carries the post-translational modification 4-aspartylphosphate. The CheB-type methylesterase domain maps to 156 to 348 (RVINTQLVAI…DKMLNYLASL (193 aa)). Active-site residues include S168, H194, and D290.

This sequence belongs to the CheB family. In terms of processing, phosphorylated by CheA. Phosphorylation of the N-terminal regulatory domain activates the methylesterase activity.

It is found in the cytoplasm. The catalysed reaction is [protein]-L-glutamate 5-O-methyl ester + H2O = L-glutamyl-[protein] + methanol + H(+). It carries out the reaction L-glutaminyl-[protein] + H2O = L-glutamyl-[protein] + NH4(+). Involved in chemotaxis. Part of a chemotaxis signal transduction system that modulates chemotaxis in response to various stimuli. Catalyzes the demethylation of specific methylglutamate residues introduced into the chemoreceptors (methyl-accepting chemotaxis proteins or MCP) by CheR. Also mediates the irreversible deamidation of specific glutamine residues to glutamic acid. This chain is Protein-glutamate methylesterase/protein-glutamine glutaminase 2, found in Shewanella sp. (strain MR-4).